A 173-amino-acid polypeptide reads, in one-letter code: Disulfide bond formation protein B 2 (173 aa).

The Cytoplasmic segment spans residues 1 to 9 (MSLAGSRLL). A helical membrane pass occupies residues 10–26 (FSLVFLVGALASWAAFN). Over 27–44 (LQTGGGLESCSLWSVQRL) the chain is Periplasmic. Residues 45–61 (LLLALGGVNLLAVIQGP) form a helical membrane-spanning segment. Residues 62-67 (GRVGRA) lie on the Cytoplasmic side of the membrane. The helical transmembrane segment at 68–85 (VYWGLNLLLGLLGVVTAG) threads the bilayer. Over 86 to 142 (RHVLLQNIPSEQLLACLPDMSFMLRQLSWWQALKLTFMGTSDCAEVTWTLLDMSLPE) the chain is Periplasmic. The cysteines at positions 101 and 128 are disulfide-linked. Residues 143 to 161 (WSLLFFVIMLIFSGYRLWR) form a helical membrane-spanning segment. The Cytoplasmic portion of the chain corresponds to 162 to 173 (QLRGARKAVALP).

The protein belongs to the DsbB family.

The protein resides in the cell inner membrane. In terms of biological role, required for disulfide bond formation in some periplasmic proteins. Acts by oxidizing the DsbA protein. In Pseudomonas fluorescens (strain ATCC BAA-477 / NRRL B-23932 / Pf-5), this protein is Disulfide bond formation protein B 2.